A 426-amino-acid polypeptide reads, in one-letter code: Synaptotagmin-13 (426 aa).

Residues 1–6 (MVLSVP) lie on the Vesicular side of the membrane. The chain crosses the membrane as a helical span at residues 7–29 (VIALGATLGTATSILALCGVTCL). Residues 30–426 (CRHMHPKKGL…QIAMWHQLHL (397 aa)) lie on the Cytoplasmic side of the membrane. 2 C2 domains span residues 158 to 275 (QAPK…AQWG) and 287 to 422 (GAGE…AMWH).

Belongs to the synaptotagmin family. As to quaternary structure, interacts with NRXN1. As to expression, expressed in brain, heart, spleen, lung and testis.

The protein localises to the cytoplasmic vesicle membrane. May be involved in transport vesicle docking to the plasma membrane. In Mus musculus (Mouse), this protein is Synaptotagmin-13 (Syt13).